Here is a 591-residue protein sequence, read N- to C-terminus: Aspartate--tRNA(Asp/Asn) ligase (591 aa).

Glu-174 lines the L-aspartate pocket. The tract at residues 198 to 201 (QLFK) is aspartate. Arg-220 serves as a coordination point for L-aspartate. ATP is bound by residues 220-222 (RDE) and Gln-229. Residue His-450 participates in L-aspartate binding. Glu-483 contributes to the ATP binding site. Position 490 (Arg-490) interacts with L-aspartate. Position 535–538 (535–538 (GLDR)) interacts with ATP.

Belongs to the class-II aminoacyl-tRNA synthetase family. Type 1 subfamily. Homodimer.

It is found in the cytoplasm. The catalysed reaction is tRNA(Asx) + L-aspartate + ATP = L-aspartyl-tRNA(Asx) + AMP + diphosphate. Functionally, aspartyl-tRNA synthetase with relaxed tRNA specificity since it is able to aspartylate not only its cognate tRNA(Asp) but also tRNA(Asn). Reaction proceeds in two steps: L-aspartate is first activated by ATP to form Asp-AMP and then transferred to the acceptor end of tRNA(Asp/Asn). The protein is Aspartate--tRNA(Asp/Asn) ligase of Pseudomonas syringae pv. syringae (strain B728a).